Here is a 99-residue protein sequence, read N- to C-terminus: Nucleoid-associated protein MGAS2096_Spy1605 (99 aa).

The protein belongs to the YbaB/EbfC family. In terms of assembly, homodimer.

It is found in the cytoplasm. The protein resides in the nucleoid. Binds to DNA and alters its conformation. May be involved in regulation of gene expression, nucleoid organization and DNA protection. This Streptococcus pyogenes serotype M12 (strain MGAS2096) protein is Nucleoid-associated protein MGAS2096_Spy1605.